The following is a 95-amino-acid chain: Small ribosomal subunit protein bS20c (95 aa).

This sequence belongs to the bacterial ribosomal protein bS20 family.

Its subcellular location is the plastid. It localises to the chloroplast. In terms of biological role, binds directly to 16S ribosomal RNA. The chain is Small ribosomal subunit protein bS20c from Pyropia yezoensis (Susabi-nori).